The primary structure comprises 131 residues: Methylglyoxal synthase (131 aa).

One can recognise an MGS-like domain in the interval 1–131; the sequence is MKIALIAHDK…GDLDYRKLRK (131 aa). Residues H8, K12, 34–37, and 54–55 contribute to the substrate site; these read TGTT and SG. D60 (proton donor/acceptor) is an active-site residue. H87 provides a ligand contact to substrate.

Belongs to the methylglyoxal synthase family.

The catalysed reaction is dihydroxyacetone phosphate = methylglyoxal + phosphate. Catalyzes the formation of methylglyoxal from dihydroxyacetone phosphate. The sequence is that of Methylglyoxal synthase from Bacillus cereus (strain ATCC 14579 / DSM 31 / CCUG 7414 / JCM 2152 / NBRC 15305 / NCIMB 9373 / NCTC 2599 / NRRL B-3711).